Reading from the N-terminus, the 95-residue chain is Putative membrane protein insertion efficiency factor (95 aa).

Belongs to the UPF0161 family.

Its subcellular location is the cell membrane. Its function is as follows. Could be involved in insertion of integral membrane proteins into the membrane. This Lactobacillus delbrueckii subsp. bulgaricus (strain ATCC 11842 / DSM 20081 / BCRC 10696 / JCM 1002 / NBRC 13953 / NCIMB 11778 / NCTC 12712 / WDCM 00102 / Lb 14) protein is Putative membrane protein insertion efficiency factor.